A 179-amino-acid polypeptide reads, in one-letter code: MTIEILRLGHRGERDKRISTHVALTSRALGAKKIIFTEEDKHVKESVERIVDSWGGDFKFEVVKSWRTYTKRFKDNGIVVHLTMYGENINKIMTEIREDISKTNKNLLLIIGAEKVPREAYDLADYNLSVGNQPHSEVAALAIFLDRLTEGKTLYSEYNDAKIKVTPSKSEKCVFVEKD.

S-adenosyl-L-methionine is bound by residues L82, G112–V116, and V130–E137.

This sequence belongs to the aTrm56 family. Homodimer.

It is found in the cytoplasm. The enzyme catalyses cytidine(56) in tRNA + S-adenosyl-L-methionine = 2'-O-methylcytidine(56) in tRNA + S-adenosyl-L-homocysteine + H(+). In terms of biological role, specifically catalyzes the AdoMet-dependent 2'-O-ribose methylation of cytidine at position 56 in tRNAs. The protein is tRNA (cytidine(56)-2'-O)-methyltransferase of Methanococcus maripaludis (strain C6 / ATCC BAA-1332).